A 424-amino-acid polypeptide reads, in one-letter code: tRNA (guanine-N(7)-)-methyltransferase non-catalytic subunit wuho (424 aa).

The interval 42–92 (LKGHTSQSQESCTAAAAASTATAASGQAPGGKEQQLANQPEEGGTSASASG) is disordered. Residues 46-68 (TSQSQESCTAAAAASTATAASGQ) show a composition bias toward low complexity. WD repeat units follow at residues 96–137 (ATST…ARLL), 184–223 (GHLSVVYDILWSEDQQHIITCDRDDKIRVTNYPATFDIHS), 227–265 (GHREFVSGLALLTEQHIASASGDKTLRVWNYIQGKELLQ), and 324–364 (AGSW…PASS).

This sequence belongs to the WD repeat TRM82 family. Forms a heterodimer with the catalytic subunit Mettl1. Interacts with mei-P26 and weakly interacts with bgcn; required for the function or formation of the mei-P26-bgcn-bam-sxl complex. Interacts with nanos; may be involved in mei-P26-dependent derepression of the BMP signaling pathway. Interacts with Myc; the interaction may be mediated by mei-P26 and may be involved in the regulation of ribosome biogenesis. As to expression, in testis, it is present at high level in hub cells, a niche for germline stem cells of testis. Ubiquitously expressed in all testicular cells throughout spermatogenesis. Ubiquitously expressed in all germline and somatic cells of the ovary.

The protein resides in the nucleus. The protein localises to the cytoplasm. Its pathway is tRNA modification; N(7)-methylguanine-tRNA biosynthesis. In terms of biological role, required for the Mettl1-dependent formation of N(7)-methylguanine at position 46 (m7G46) in tRNA. In the Mettl1-wuho methyltransferase complex, it is required to stabilize and induce conformational changes of the catalytic subunit. Required for binding of nanos mRNA and repression of translation by the mei-P26-bgcn-bam-sxl complex. May cooperate with mei-P26 and nanos to derepress the BMP signaling pathway. May cooperate with mei-P26 to suppress expression of a subset of microRNAs. May cooperate with mei-P26 to regulate bam expression levels in germline cells during gametogenesis. Required to promote mitosis to meiosis transition during gametogenesis. May regulate germline cell division in part by regulating ribosome biogenesis. The polypeptide is tRNA (guanine-N(7)-)-methyltransferase non-catalytic subunit wuho (Drosophila melanogaster (Fruit fly)).